Here is a 133-residue protein sequence, read N- to C-terminus: Small ribosomal subunit protein uS8 (133 aa).

The protein belongs to the universal ribosomal protein uS8 family. In terms of assembly, part of the 30S ribosomal subunit. Contacts proteins S5 and S12.

In terms of biological role, one of the primary rRNA binding proteins, it binds directly to 16S rRNA central domain where it helps coordinate assembly of the platform of the 30S subunit. This Nostoc punctiforme (strain ATCC 29133 / PCC 73102) protein is Small ribosomal subunit protein uS8.